The primary structure comprises 955 residues: MKLPGQEELEAACACENVPVGQLDSGPSSGPCPDDPSDTGSRELGPPEDPPLFLQLNELLGWPQTLEWREMGRWVLFEEKLEVDAGRWSAPHVPTLALPSLQNLRSLLAEGLVLLDCPAQNLLELVEQVTRVESLSPELRGQLQALLLQRPQHHTQTTGSRPCWGPAQSRKAAHNKEAPMQQQCQSPLRQKLPPGAEAGAVLAGELGFLAQPLAAFVRLRDPVWLGPLTEVPLPSRFFCLLLGPPMLGKGYHELGRAAAVLLSDPHFQWSVRRASNLHDLLTALDAFLEEVTVLPPGRWDPTARIPPPRCLPSRHKRPPLHLQKVKGLSVPHRTQAEDRHRNGPLAPSPELQRTGRLFGGLVQDVRRKASWYPSDFSDALHPQCVSAVLYIYLATVTNAITFGGLLGDATDGAQGVLESLLGTAVAGAAFCLMAGQPLTVLSSTGPVLVFERLLFAFCRDYSLDYLPFRLWVGIWVAVFCLALVATEASVLVRYFTRFTEEGFCALISLIFIYDAVGKMLNLAHAYPIQRPGSLAYGCLCQFPGPGGNESQWTRPRPQSRDDLLSVDLGLVNASLLPPHECVQQGGYPRGPGCHTVPDIAFFSLLLFLTSFLFAIALKHMKTSRFFPSVVRKVLSDFSSILAILLGCGLDALLGLAMPKLMVPREFKPTLPGRGWLVPPFGANPWWLSVAAALPALLLSILIFMDQQITAVILNRVEYRLRKGAGFHLDLFCVALLMLLTSVLGLPWYVSATVLSLAHMDSLRRESRACAPGEPHSFLGIREQRLTGLAVFTLTGVSIFLAPVLKFIPMPVLYGIFLYMGVAALSSIQFMKRVQLMLMPAKHQPDLLLLRHVPLSRVHLFTAIQLACLGLLWIIKSTPAAIIFPLMLLGLVGVRKALEWVFSPQELLWLDELMPEEERNVPEKGLEPGHSFSGSDSEDSELMYQPKAPEINISVN.

Disordered stretches follow at residues 20–50, 154–190, and 331–352; these read VGQL…PEDP, HTQT…PLRQ, and PHRT…PELQ. The next 4 helical transmembrane spans lie at 387–407, 415–435, 472–492, and 503–523; these read AVLY…GLLG, GVLE…LMAG, VGIW…SVLV, and FCAL…LNLA. The tract at residues 387-955 is membrane (anion exchange); it reads AVLYIYLATV…KAPEINISVN (569 aa). Asn-548 and Asn-572 each carry an N-linked (GlcNAc...) asparagine glycan. A run of 7 helical transmembrane segments spans residues 596-616, 637-657, 684-704, 730-750, 785-804, 811-830, and 871-891; these read VPDI…FAIA, FSSI…GLAM, PWWL…LIFM, LFCV…WYVS, LTGL…APVL, VLYG…IQFM, and LWII…LGLV. The disordered stretch occupies residues 918-955; that stretch reads RNVPEKGLEPGHSFSGSDSEDSELMYQPKAPEINISVN. Asn-951 carries N-linked (GlcNAc...) asparagine glycosylation.

This sequence belongs to the anion exchanger (TC 2.A.31) family. In terms of tissue distribution, highly expressed in kidney. Expressed in the outer medulla and the inner medulla in the kidney cortex. Only expressed in beta-intercalated cells.

The protein resides in the lateral cell membrane. It localises to the apical cell membrane. The protein localises to the basolateral cell membrane. The enzyme catalyses 2 hydrogencarbonate(out) + chloride(in) + Na(+)(out) = 2 hydrogencarbonate(in) + chloride(out) + Na(+)(in). It catalyses the reaction K(+)(in) + 2 hydrogencarbonate(in) + chloride(out) = K(+)(out) + 2 hydrogencarbonate(out) + chloride(in). It carries out the reaction Li(+)(in) + 2 hydrogencarbonate(in) + chloride(out) = Li(+)(out) + 2 hydrogencarbonate(out) + chloride(in). The catalysed reaction is Rb(+)(in) + 2 hydrogencarbonate(in) + chloride(out) = Rb(+)(out) + 2 hydrogencarbonate(out) + chloride(in). The enzyme catalyses Cs(+)(in) + 2 hydrogencarbonate(in) + chloride(out) = Cs(+)(out) + 2 hydrogencarbonate(out) + chloride(in). In terms of biological role, electroneutral Cl(-)/HCO3(-) antiporter that favors chloride ion entry and efflux of hydrogencarbonate and sodium ion across the basolateral membrane and may participat in salivary secretion. Also mediates Cl(-)/HCO3(-) exchange activity in the presence of K(+) as well as Cs(+), Li(+), and Rb(+). Does not contribute to Cl(-)/HCO3(-) exchanger in the apical membrane of the upper villous epithelium. The polypeptide is Anion exchange protein 4 (Oryctolagus cuniculus (Rabbit)).